We begin with the raw amino-acid sequence, 352 residues long: 4-hydroxy-3-methylbut-2-en-1-yl diphosphate synthase (flavodoxin) (352 aa).

Positions 265, 268, 300, and 307 each coordinate [4Fe-4S] cluster.

It belongs to the IspG family. The cofactor is [4Fe-4S] cluster.

The enzyme catalyses (2E)-4-hydroxy-3-methylbut-2-enyl diphosphate + oxidized [flavodoxin] + H2O + 2 H(+) = 2-C-methyl-D-erythritol 2,4-cyclic diphosphate + reduced [flavodoxin]. The protein operates within isoprenoid biosynthesis; isopentenyl diphosphate biosynthesis via DXP pathway; isopentenyl diphosphate from 1-deoxy-D-xylulose 5-phosphate: step 5/6. Functionally, converts 2C-methyl-D-erythritol 2,4-cyclodiphosphate (ME-2,4cPP) into 1-hydroxy-2-methyl-2-(E)-butenyl 4-diphosphate. The chain is 4-hydroxy-3-methylbut-2-en-1-yl diphosphate synthase (flavodoxin) from Persephonella marina (strain DSM 14350 / EX-H1).